An 854-amino-acid polypeptide reads, in one-letter code: Patatin-like phospholipase domain-containing protein CHGG_02900 (854 aa).

Disordered stretches follow at residues 1–29 (MAGP…YGFP), 58–138 (LSAP…PPLS), and 159–186 (QRRV…RSKD). Basic and acidic residues predominate over residues 96 to 116 (DLARRPESSGVGFHDEDRTAR). Low complexity predominate over residues 119–132 (PAGAATAAAAGVAT). A helical membrane pass occupies residues 199–219 (WPLLGVVTCWLVGLSVVHVLA). In terms of domain architecture, PNPLA spans 387 to 578 (LCLSGGATFA…RTDIPIKALN (192 aa)). Positions 418-422 (GTSGG) match the GXSXG motif. The Nucleophile role is filled by S420. The active-site Proton acceptor is D565. Disordered stretches follow at residues 724–776 (RENR…SILS) and 791–830 (RGGI…LEFG). Residues 729 to 751 (GGGLGDGGVGSSGGAGGGAGGGQ) show a composition bias toward gly residues. Low complexity predominate over residues 752–761 (AEAVAGQAAG). Acidic residues predominate over residues 799-812 (TESEDETSDLDADF).

This sequence belongs to the PLPL family.

The protein localises to the membrane. In terms of biological role, probable lipid hydrolase. In Chaetomium globosum (strain ATCC 6205 / CBS 148.51 / DSM 1962 / NBRC 6347 / NRRL 1970) (Soil fungus), this protein is Patatin-like phospholipase domain-containing protein CHGG_02900.